A 1009-amino-acid polypeptide reads, in one-letter code: Putative receptor-like protein 8 (1009 aa).

The N-terminal stretch at 1–22 (MKTNFVILLLLLCVFAISPSQQ) is a signal peptide. Residues 23–961 (EEINQHNPGI…EEDDEAPVDM (939 aa)) lie on the Extracellular side of the membrane. 2 N-linked (GlcNAc...) asparagine glycosylation sites follow: Asn-159 and Asn-197. An LRR 1; degenerate repeat occupies 204 to 231 (FEEVRSLELSAGLNGFVDNVEGYKSLRK). 25 LRR repeats span residues 232–255 (LKNL…PFIN), 257–281 (ATSL…EIKD), 282–305 (LTNL…LTHL), 306–329 (KKLK…VVCE), 331–354 (KNLW…LGRL), 355–377 (NKLR…TFNR), 379–402 (ESLE…PLAN), 404–427 (TKLK…SEPK), 442–465 (LEKI…ATIV), 466–490 (HELQ…GYAL), 492–514 (NLLR…MGEM), 515–538 (VNIT…FVTG), 540–565 (FSLK…SFTS), 567–587 (EELR…LLSS), 588–612 (NTTL…MSNL), 613–636 (SGLT…LLAI), 638–660 (FLSL…VGGE), 662–681 (GIKL…DTLL), 682–705 (EKVQ…VNTE), 707–728 (IYIL…LCDL), 729–752 (RNIR…LYNL), 819–842 (LDYM…ELGS), 843–866 (LSKL…SFSN), 867–891 (LKDI…LTNL), and 893–916 (SLVV…QFNT). Residue Asn-267 is glycosylated (N-linked (GlcNAc...) asparagine). Asn-390 and Asn-402 each carry an N-linked (GlcNAc...) asparagine glycan. Asn-497, Asn-516, Asn-526, and Asn-551 each carry an N-linked (GlcNAc...) asparagine glycan. N-linked (GlcNAc...) asparagine glycans are attached at residues Asn-588 and Asn-611. Asn-716 and Asn-751 each carry an N-linked (GlcNAc...) asparagine glycan. Residues Asn-850, Asn-890, Asn-903, and Asn-934 are each glycosylated (N-linked (GlcNAc...) asparagine). A disordered region spans residues 934 to 955 (NRSCDAKKTSDESENGGEEEDD). Positions 945 to 955 (ESENGGEEEDD) are enriched in acidic residues. The helical transmembrane segment at 962–982 (LAFYFSSASTYVTTLIGIFIL) threads the bilayer. Topologically, residues 983-1009 (MCFDCPLRRAWLRIVDASIASVKSMLP) are cytoplasmic.

Belongs to the RLP family.

Its subcellular location is the cell membrane. This Arabidopsis thaliana (Mouse-ear cress) protein is Putative receptor-like protein 8.